A 328-amino-acid polypeptide reads, in one-letter code: Phenylalanine--tRNA ligase alpha subunit (328 aa).

E245 serves as a coordination point for Mg(2+).

Belongs to the class-II aminoacyl-tRNA synthetase family. Phe-tRNA synthetase alpha subunit type 1 subfamily. In terms of assembly, tetramer of two alpha and two beta subunits. It depends on Mg(2+) as a cofactor.

It is found in the cytoplasm. The catalysed reaction is tRNA(Phe) + L-phenylalanine + ATP = L-phenylalanyl-tRNA(Phe) + AMP + diphosphate + H(+). This chain is Phenylalanine--tRNA ligase alpha subunit, found in Helicobacter acinonychis (strain Sheeba).